The following is a 246-amino-acid chain: tRNA (guanine-N(1)-)-methyltransferase (246 aa).

S-adenosyl-L-methionine-binding positions include glycine 114 and 133–138 (LGDYVL).

This sequence belongs to the RNA methyltransferase TrmD family. In terms of assembly, homodimer.

It is found in the cytoplasm. It carries out the reaction guanosine(37) in tRNA + S-adenosyl-L-methionine = N(1)-methylguanosine(37) in tRNA + S-adenosyl-L-homocysteine + H(+). Specifically methylates guanosine-37 in various tRNAs. The chain is tRNA (guanine-N(1)-)-methyltransferase from Enterococcus faecalis (strain ATCC 700802 / V583).